We begin with the raw amino-acid sequence, 825 residues long: IQ and AAA domain-containing protein 1-like (825 aa).

The IQ domain occupies 206–235; that stretch reads RDQGAIVIQKVWKGYLQRKRIEQDRRVEME. The span at 344–366 shows a compositional bias: basic and acidic residues; that stretch reads QAQESRKKDQEKKEKNKEKEKEK. Disordered stretches follow at residues 344-378 and 459-487; these read QAQE…KEEK and DREE…KDLT. Basic residues predominate over residues 467–482; that stretch reads KSPKKKGGKKSGKKKK. Residue 572–579 participates in ATP binding; that stretch reads GPSGMGKK.

Belongs to the AAA ATPase family.

The sequence is that of IQ and AAA domain-containing protein 1-like (Iqca1l) from Mus musculus (Mouse).